The following is a 344-amino-acid chain: uncharacterized protein (344 aa).

In terms of domain architecture, HTH araC/xylS-type spans 242–343 (RGITALVRSK…GVAPSEYSRR (102 aa)). 2 consecutive DNA-binding regions (H-T-H motif) follow at residues 263–284 (TDVA…AEEG) and 310–333 (VQQV…KRWY).

This is an uncharacterized protein from Mycobacterium bovis (strain ATCC BAA-935 / AF2122/97).